We begin with the raw amino-acid sequence, 1285 residues long: Period circadian protein homolog 1 (1285 aa).

The tract at residues 1–134 (MSGPLEGADG…SSEQSARART (134 aa)) is disordered. The interval 1–151 (MSGPLEGADG…LRELKLRLPP (151 aa)) is interaction with BTRC. Low complexity-rich tracts occupy residues 48 to 57 (NSNGSSGNES) and 64 to 115 (GASQ…ASSE). The span at 116-132 (QDNPSTSGCSSEQSARA) shows a compositional bias: polar residues. Threonine 121 is modified (phosphothreonine; by CSNK1E). Residues serine 122 and serine 126 each carry the phosphoserine; by CSNK1E modification. The Nuclear export signal 1 signature appears at 138 to 147 (LMTALRELKL). 2 consecutive PAS domains span residues 208 to 275 (ITSE…PFRL) and 348 to 414 (YEAP…KILQ). A PAC domain is found at 422–465 (HSPIRFCARNGEYVTMDTSWAGFVHPWSRKVAFVLGRHKVRTAP). The short motif at 489–498 (LSEQIHRLLL) is the Nuclear export signal 2 element. Disordered regions lie at residues 503 to 544 (SSSP…PAPV) and 643 to 694 (TKRK…KEPV). 2 stretches are compositionally biased toward low complexity: residues 523-533 (SPGSSSDSNGG) and 648-658 (ASSSSCTASSA). The segment at 592–811 (ELEVVPMPNQ…GLDSSSATPS (220 aa)) is required for phosphorylation by CSNK1E. 4 positions are modified to phosphoserine: serine 657, serine 659, serine 700, and serine 811. Disordered stretches follow at residues 802 to 867 (GLDS…PPST) and 931 to 1030 (LSQA…DALS). The short motif at 820–836 (VPPGRRHHCRSKAKRSR) is the Nuclear localization signal element. Residues 823 to 840 (GRRHHCRSKAKRSRHHHT) show a composition bias toward basic residues. The segment covering 853-867 (SPVPPSGPWPPPPST) has biased composition (pro residues). Low complexity predominate over residues 943–954 (ASHSPSPSLTPL). Residues 967-979 (FNSRCSSPLQLNL) show a composition bias toward polar residues. A phosphoserine mark is found at serine 972 and serine 973. A Nuclear export signal 3 motif is present at residues 975–982 (LQLNLLQL). The short motif at 1036-1040 (LELLL) is the LXXLL element. Low complexity predominate over residues 1045-1055 (RSGTGSAASGS). 2 disordered regions span residues 1045-1091 (RSGT…SKYF) and 1202-1285 (IQDP…NSTS). Residues 1056–1070 (LGSGLGSGSGSGSHE) are compositionally biased toward gly residues. The span at 1071–1088 (GGSTSASITRSSQSSHTS) shows a compositional bias: low complexity. The tract at residues 1142 to 1285 (SRDRASVLKQ…ALPAEENSTS (144 aa)) is CRY binding domain. Residues 1229 to 1241 (GEGGGGGGGGGEG) show a composition bias toward gly residues. Polar residues predominate over residues 1269-1285 (GGSSSSPALPAEENSTS).

As to quaternary structure, homodimer. Component of the circadian core oscillator, which includes the CRY proteins, CLOCK or NPAS2, BMAL1 or BMAL2, CSNK1D and/or CSNK1E, TIMELESS, and the PER proteins. Interacts directly with TIMELESS, PER2, PER3, CRY1 and CRY2. Interacts with BMAL1 and CLOCK. Interacts with GPRASP1. Interacts (phosphorylated) with BTRC and FBXW11; the interactions trigger proteasomal degradation. Interacts with NONO, WDR5 and SFPQ. Interacts with USP2. Interacts with HNF4A. In terms of processing, phosphorylated on serine residues by CSNK1D, CSNK1E and probably also by CSNK1G2. Phosphorylation by CSNK1D or CSNK1E promotes nuclear location of PER proteins as well as ubiquitination and subsequent degradation. May be dephosphorylated by PP1. Post-translationally, ubiquitinated; requires phosphorylation by CSNK1E and interaction with BTRC and FBXW11. Deubiquitinated by USP2. As to expression, expressed in the brain, mainly in the suprachiasmatic nucleus (SCN). Expression also found in the harderian gland, lung, eye, intestine, liver and skeletal muscle.

The protein localises to the nucleus. It is found in the cytoplasm. Functionally, transcriptional repressor which forms a core component of the circadian clock. The circadian clock, an internal time-keeping system, regulates various physiological processes through the generation of approximately 24 hour circadian rhythms in gene expression, which are translated into rhythms in metabolism and behavior. It is derived from the Latin roots 'circa' (about) and 'diem' (day) and acts as an important regulator of a wide array of physiological functions including metabolism, sleep, body temperature, blood pressure, endocrine, immune, cardiovascular, and renal function. Consists of two major components: the central clock, residing in the suprachiasmatic nucleus (SCN) of the brain, and the peripheral clocks that are present in nearly every tissue and organ system. Both the central and peripheral clocks can be reset by environmental cues, also known as Zeitgebers (German for 'timegivers'). The predominant Zeitgeber for the central clock is light, which is sensed by retina and signals directly to the SCN. The central clock entrains the peripheral clocks through neuronal and hormonal signals, body temperature and feeding-related cues, aligning all clocks with the external light/dark cycle. Circadian rhythms allow an organism to achieve temporal homeostasis with its environment at the molecular level by regulating gene expression to create a peak of protein expression once every 24 hours to control when a particular physiological process is most active with respect to the solar day. Transcription and translation of core clock components (CLOCK, NPAS2, BMAL1, BMAL2, PER1, PER2, PER3, CRY1 and CRY2) plays a critical role in rhythm generation, whereas delays imposed by post-translational modifications (PTMs) are important for determining the period (tau) of the rhythms (tau refers to the period of a rhythm and is the length, in time, of one complete cycle). A diurnal rhythm is synchronized with the day/night cycle, while the ultradian and infradian rhythms have a period shorter and longer than 24 hours, respectively. Disruptions in the circadian rhythms contribute to the pathology of cardiovascular diseases, cancer, metabolic syndromes and aging. A transcription/translation feedback loop (TTFL) forms the core of the molecular circadian clock mechanism. Transcription factors, CLOCK or NPAS2 and BMAL1 or BMAL2, form the positive limb of the feedback loop, act in the form of a heterodimer and activate the transcription of core clock genes and clock-controlled genes (involved in key metabolic processes), harboring E-box elements (5'-CACGTG-3') within their promoters. The core clock genes: PER1/2/3 and CRY1/2 which are transcriptional repressors form the negative limb of the feedback loop and interact with the CLOCK|NPAS2-BMAL1|BMAL2 heterodimer inhibiting its activity and thereby negatively regulating their own expression. This heterodimer also activates nuclear receptors NR1D1/2 and RORA/B/G, which form a second feedback loop and which activate and repress BMAL1 transcription, respectively. Regulates circadian target genes expression at post-transcriptional levels, but may not be required for the repression at transcriptional level. Controls PER2 protein decay. Represses CRY2 preventing its repression on CLOCK/BMAL1 target genes such as FXYD5 and SCNN1A in kidney and PPARA in liver. Besides its involvement in the maintenance of the circadian clock, has an important function in the regulation of several processes. Participates in the repression of glucocorticoid receptor NR3C1/GR-induced transcriptional activity by reducing the association of NR3C1/GR to glucocorticoid response elements (GREs) by BMAL1:CLOCK. Plays a role in the modulation of the neuroinflammatory state via the regulation of inflammatory mediators release, such as CCL2 and IL6. In spinal astrocytes, negatively regulates the MAPK14/p38 and MAPK8/JNK MAPK cascades as well as the subsequent activation of NFkappaB. Coordinately regulates the expression of multiple genes that are involved in the regulation of renal sodium reabsorption. Can act as gene expression activator in a gene and tissue specific manner, in kidney enhances WNK1 and SLC12A3 expression in collaboration with CLOCK. Modulates hair follicle cycling. Represses the CLOCK-BMAL1 induced transcription of BHLHE40/DEC1. The sequence is that of Period circadian protein homolog 1 (PER1) from Spalax judaei (Judean Mountains blind mole rat).